Consider the following 393-residue polypeptide: Pre-mRNA-splicing regulator WTAP (393 aa).

Residues 242–393 form a disordered region; it reads QIQISGNRTP…SSVNVQGSVL (152 aa). Positions 254 to 267 are enriched in basic and acidic residues; the sequence is EPKDEGETSGKDCG. Composition is skewed to polar residues over residues 272 to 286 and 321 to 353; these read GPSN…THSS and DGSS…SNDT. Residues 354-365 show a composition bias toward basic and acidic residues; sequence DSNHDSQEEKPV. Residues 369–393 are compositionally biased toward polar residues; the sequence is GNRTVSSRHLQNGLDSSVNVQGSVL.

It belongs to the fl(2)d family. Component of the WMM complex, a N6-methyltransferase complex composed of a catalytic subcomplex, named MAC, and of an associated subcomplex, named MACOM. Component of the MACOM subcomplex.

The protein localises to the nucleus speckle. It localises to the nucleus. Its subcellular location is the nucleoplasm. Associated component of the WMM complex, a complex that mediates N6-methyladenosine (m6A) methylation of RNAs, a modification that plays a role in the efficiency of mRNA splicing and RNA processing. The protein is Pre-mRNA-splicing regulator WTAP of Xenopus laevis (African clawed frog).